Here is a 293-residue protein sequence, read N- to C-terminus: Ribosomal protein L11 methyltransferase (293 aa).

S-adenosyl-L-methionine is bound by residues Thr145, Gly166, Asp188, and Asn230.

Belongs to the methyltransferase superfamily. PrmA family.

It localises to the cytoplasm. It carries out the reaction L-lysyl-[protein] + 3 S-adenosyl-L-methionine = N(6),N(6),N(6)-trimethyl-L-lysyl-[protein] + 3 S-adenosyl-L-homocysteine + 3 H(+). Functionally, methylates ribosomal protein L11. This Salmonella agona (strain SL483) protein is Ribosomal protein L11 methyltransferase.